Here is a 452-residue protein sequence, read N- to C-terminus: UPF0761 membrane protein Bpet3042 (452 aa).

The next 6 membrane-spanning stretches (helical) occupy residues 56 to 76, 114 to 134, 153 to 173, 195 to 215, 225 to 245, and 259 to 279; these read VLGIVPMLAVVLSLFTAFPVF, LTAIGGAFLVVTSLLLIMTID, ALVYWAVVTLGPVVAGASLWA, AISFLPLILTGLGFAALFVVV, ALVGGFGTAIVLELMKAAFAY, and AFATLPIFLLWIYLSWLAVLF.

This sequence belongs to the UPF0761 family.

The protein localises to the cell inner membrane. The chain is UPF0761 membrane protein Bpet3042 from Bordetella petrii (strain ATCC BAA-461 / DSM 12804 / CCUG 43448).